Consider the following 211-residue polypeptide: ATP phosphoribosyltransferase (211 aa).

Belongs to the ATP phosphoribosyltransferase family. Short subfamily. As to quaternary structure, heteromultimer composed of HisG and HisZ subunits.

It localises to the cytoplasm. The enzyme catalyses 1-(5-phospho-beta-D-ribosyl)-ATP + diphosphate = 5-phospho-alpha-D-ribose 1-diphosphate + ATP. The protein operates within amino-acid biosynthesis; L-histidine biosynthesis; L-histidine from 5-phospho-alpha-D-ribose 1-diphosphate: step 1/9. In terms of biological role, catalyzes the condensation of ATP and 5-phosphoribose 1-diphosphate to form N'-(5'-phosphoribosyl)-ATP (PR-ATP). Has a crucial role in the pathway because the rate of histidine biosynthesis seems to be controlled primarily by regulation of HisG enzymatic activity. The protein is ATP phosphoribosyltransferase of Thermosynechococcus vestitus (strain NIES-2133 / IAM M-273 / BP-1).